The following is a 611-amino-acid chain: Chloroplast sensor kinase, chloroplastic (611 aa).

The N-terminal 79 residues, 1-79, are a transit peptide targeting the chloroplast; sequence MLLSAIASQT…PGGGETMVAS (79 aa). Residues 17–50 form a disordered region; sequence NLHFSNSIPNPRPSNPSLKLLNASSSSSSSSSSS. A compositionally biased stretch (low complexity) spans 40–50; sequence SSSSSSSSSSS. The interval 116–300 is GAF; that stretch reads DFQRLCLEQL…VMDQKTMLLQ (185 aa). Residue C121 participates in [3Fe-4S] cluster binding. S188 carries the phosphoserine modification. Residues 312–602 enclose the Histidine kinase domain; that stretch reads KLVEQIRGPL…RVELWLPAFP (291 aa). A coiled-coil region spans residues 345 to 380; sequence VEDLIVQGDQIKDTLEELQDAVHLTKANIVRHNEEA. Basic and acidic residues predominate over residues 385–402; it reads NKTHNETRRSKYEHKDPI. Residues 385–420 are disordered; that stretch reads NKTHNETRRSKYEHKDPIDGSQISSTRLSLGSGLDD.

Belongs to the chloroplast sensor kinase protein family. Self-interacts. Interacts with the plastoquinone analog 2,5-dibromo-3-methyl-5-isopropyl-p-benzoquinone (DBMIB) and with SIGA/SIG1. [3Fe-4S] cluster is required as a cofactor. In terms of processing, autophosphorylated, possibly on tyrosine residues, in photosystem I (PS I) light and in the presence of manganese ions Mn(2+), to a lesser degree, in the presence of calcium ions Ca(2+), but not in the presence of magnesium ions Mg(2+). Dithiothreitol (DTT) stimulates autophosphorylation. Phosphorylated on Ser-188 in vivo after exposure to far-red light (when plastoquinone (PQ) is oxidized). Not phosphorylated under orange light (reduces PQ).

The protein localises to the plastid. It is found in the chloroplast stroma. The catalysed reaction is L-tyrosyl-[protein] + ATP = O-phospho-L-tyrosyl-[protein] + ADP + H(+). In terms of biological role, sensor kinase that senses the plastoquinone (PQ) redox state involved in stoichiometry adjustment of both photosystems (e.g. long-term adaptation via transcriptional regulation of reaction center genes of photosystems I and II) and state transitions (e.g. short-term adaptation involving reversible post-translational phosphorylation of light-harvesting complex II, LHC II), thus linking photosynthesis with gene expression in chloroplasts. Autophosphorylates, probably on a tyrosine residue. Probably phosphorylates SIGA/SIG1 in response to plastoquinone redox state modification. Reduced PQ suppresses its autophosphorylation activity. Represses expression of a number of chloroplast-encoded genes. The protein is Chloroplast sensor kinase, chloroplastic of Arabidopsis thaliana (Mouse-ear cress).